The sequence spans 362 residues: Ferrochelatase (362 aa).

Positions 228 and 309 each coordinate Fe cation.

Belongs to the ferrochelatase family.

The protein resides in the cytoplasm. The catalysed reaction is heme b + 2 H(+) = protoporphyrin IX + Fe(2+). Its pathway is porphyrin-containing compound metabolism; protoheme biosynthesis; protoheme from protoporphyrin-IX: step 1/1. Functionally, catalyzes the ferrous insertion into protoporphyrin IX. The protein is Ferrochelatase of Bordetella bronchiseptica (strain ATCC BAA-588 / NCTC 13252 / RB50) (Alcaligenes bronchisepticus).